A 93-amino-acid chain; its full sequence is Alpha-defensin 5 (93 aa).

The N-terminal stretch at 1–19 (MKTFVLLSALVLLAFQVQA) is a signal peptide. Positions 20–58 (DPIHKTDEETNTEEQPGEEDQAVSISFGGQEGSALHEEL) are excised as a propeptide. 3 disulfide bridges follow: Cys-64/Cys-92, Cys-66/Cys-81, and Cys-71/Cys-91.

Belongs to the alpha-defensin family.

It localises to the secreted. Its function is as follows. Probably contributes to the antimicrobial barrier function of the small bowel mucosa. The protein is Alpha-defensin 5 (Defa5) of Mus musculus (Mouse).